The following is a 508-amino-acid chain: Photosystem II CP47 reaction center protein (508 aa).

6 helical membrane passes run 21–36 (SVHI…WAGS), 101–115 (IVFS…IWHW), 140–156 (GIHL…FGAF), 203–218 (IAAG…FHLS), 237–252 (VLSS…AFVV), and 457–472 (SFAL…HGAR).

The protein belongs to the PsbB/PsbC family. PsbB subfamily. In terms of assembly, PSII is composed of 1 copy each of membrane proteins PsbA, PsbB, PsbC, PsbD, PsbE, PsbF, PsbH, PsbI, PsbJ, PsbK, PsbL, PsbM, PsbT, PsbX, PsbY, PsbZ, Psb30/Ycf12, at least 3 peripheral proteins of the oxygen-evolving complex and a large number of cofactors. It forms dimeric complexes. It depends on Binds multiple chlorophylls. PSII binds additional chlorophylls, carotenoids and specific lipids. as a cofactor.

It localises to the plastid. The protein localises to the chloroplast thylakoid membrane. Functionally, one of the components of the core complex of photosystem II (PSII). It binds chlorophyll and helps catalyze the primary light-induced photochemical processes of PSII. PSII is a light-driven water:plastoquinone oxidoreductase, using light energy to abstract electrons from H(2)O, generating O(2) and a proton gradient subsequently used for ATP formation. This Carica papaya (Papaya) protein is Photosystem II CP47 reaction center protein.